Here is a 158-residue protein sequence, read N- to C-terminus: Disease resistance response protein DRRG49-C (158 aa).

The protein belongs to the BetVI family.

This is Disease resistance response protein DRRG49-C from Pisum sativum (Garden pea).